The following is a 627-amino-acid chain: uncharacterized protein (627 aa).

2 disordered regions span residues E441 to N466 and D608 to R627. Over residues D615 to R627 the composition is skewed to basic and acidic residues.

This is an uncharacterized protein from Homo sapiens (Human).